The following is a 100-amino-acid chain: Large ribosomal subunit protein uL23 (100 aa).

It belongs to the universal ribosomal protein uL23 family. In terms of assembly, part of the 50S ribosomal subunit. Contacts protein L29, and trigger factor when it is bound to the ribosome.

One of the early assembly proteins it binds 23S rRNA. One of the proteins that surrounds the polypeptide exit tunnel on the outside of the ribosome. Forms the main docking site for trigger factor binding to the ribosome. The chain is Large ribosomal subunit protein uL23 from Thermotoga maritima (strain ATCC 43589 / DSM 3109 / JCM 10099 / NBRC 100826 / MSB8).